The primary structure comprises 407 residues: Bifunctional enzyme IspD/IspF (407 aa).

The 2-C-methyl-D-erythritol 4-phosphate cytidylyltransferase stretch occupies residues 1–246; sequence MTEASENASA…SSERTHFPDI (246 aa). The 2-C-methyl-D-erythritol 2,4-cyclodiphosphate synthase stretch occupies residues 247-407; the sequence is RTGNGYDVHA…SVVFPGEVPE (161 aa). Residues Asp-253 and His-255 each contribute to the a divalent metal cation site. Residues 253-255 and 279-280 contribute to the 4-CDP-2-C-methyl-D-erythritol 2-phosphate site; these read DVH and HS. Residue His-287 participates in a divalent metal cation binding. Residues 301–303, 377–380, Phe-384, and Arg-387 contribute to the 4-CDP-2-C-methyl-D-erythritol 2-phosphate site; these read DIG and TTNE.

It in the N-terminal section; belongs to the IspD/TarI cytidylyltransferase family. IspD subfamily. This sequence in the C-terminal section; belongs to the IspF family. The cofactor is a divalent metal cation.

The enzyme catalyses 2-C-methyl-D-erythritol 4-phosphate + CTP + H(+) = 4-CDP-2-C-methyl-D-erythritol + diphosphate. The catalysed reaction is 4-CDP-2-C-methyl-D-erythritol 2-phosphate = 2-C-methyl-D-erythritol 2,4-cyclic diphosphate + CMP. The protein operates within isoprenoid biosynthesis; isopentenyl diphosphate biosynthesis via DXP pathway; isopentenyl diphosphate from 1-deoxy-D-xylulose 5-phosphate: step 2/6. Its pathway is isoprenoid biosynthesis; isopentenyl diphosphate biosynthesis via DXP pathway; isopentenyl diphosphate from 1-deoxy-D-xylulose 5-phosphate: step 4/6. Its function is as follows. Bifunctional enzyme that catalyzes the formation of 4-diphosphocytidyl-2-C-methyl-D-erythritol from CTP and 2-C-methyl-D-erythritol 4-phosphate (MEP) (IspD), and catalyzes the conversion of 4-diphosphocytidyl-2-C-methyl-D-erythritol 2-phosphate (CDP-ME2P) to 2-C-methyl-D-erythritol 2,4-cyclodiphosphate (ME-CPP) with a corresponding release of cytidine 5-monophosphate (CMP) (IspF). The chain is Bifunctional enzyme IspD/IspF from Mesorhizobium japonicum (strain LMG 29417 / CECT 9101 / MAFF 303099) (Mesorhizobium loti (strain MAFF 303099)).